A 307-amino-acid polypeptide reads, in one-letter code: Serine/threonine-protein phosphatase 4 catalytic subunit (307 aa).

N-acetylalanine is present on Ala2. Residues Asp54, His56, Asp82, and Asn114 each coordinate Mn(2+). The active-site Proton donor is His115. Positions 164 and 238 each coordinate Mn(2+). The residue at position 307 (Leu307) is a Leucine methyl ester.

This sequence belongs to the PPP phosphatase family. PP-4 (PP-X) subfamily. As to quaternary structure, serine/threonine-protein phosphatase 4 (PP4) occurs in different assemblies of the catalytic and one or more regulatory subunits. Component of the PP4 complexes PPP4C-PPP4R1, PPP4C-PPP4R2, PPP4C-PPP4R2-PPP4R3A, PPP4C-PPP4R2-PPP4R3B and PPP4C-PPP4R4. The PPP4C-PPP4R2 complex appears to be a tetramer composed of 2 molecules of PPP4C and 2 molecules of PPP4R2. Interacts with REL, NFKB1/p50 and RELA. Interacts with SMN1 and GEMIN4. Interacts with IRS4 (phosphorylated). Interacts with SMEK1/PPP4R3A; the interaction requires PP4R2. Interacts with HDAC3. Mn(2+) is required as a cofactor. Methylation at the C-terminal Leu-307 is critical for interactions with regulatory subunits and functions in DNA repair.

Its subcellular location is the cytoplasm. The protein localises to the nucleus. It localises to the cytoskeleton. It is found in the microtubule organizing center. The protein resides in the centrosome. The enzyme catalyses O-phospho-L-seryl-[protein] + H2O = L-seryl-[protein] + phosphate. It carries out the reaction O-phospho-L-threonyl-[protein] + H2O = L-threonyl-[protein] + phosphate. Its function is as follows. Protein phosphatase that is involved in many processes such as microtubule organization at centrosomes, maturation of spliceosomal snRNPs, apoptosis, DNA repair, tumor necrosis factor (TNF)-alpha signaling, activation of c-Jun N-terminal kinase MAPK8, regulation of histone acetylation, DNA damage checkpoint signaling, NF-kappa-B activation and cell migration. The PPP4C-PPP4R1 PP4 complex may play a role in dephosphorylation and regulation of HDAC3. The PPP4C-PPP4R2-PPP4R3A PP4 complex specifically dephosphorylates H2AX phosphorylated on Ser-140 (gamma-H2AX) generated during DNA replication and required for DNA DSB repair. Dephosphorylates NDEL1 at CDK1 phosphorylation sites and negatively regulates CDK1 activity in interphase. In response to DNA damage, catalyzes RPA2 dephosphorylation, an essential step for DNA repair since it allows the efficient RPA2-mediated recruitment of RAD51 to chromatin. The sequence is that of Serine/threonine-protein phosphatase 4 catalytic subunit (Ppp4c) from Rattus norvegicus (Rat).